Consider the following 573-residue polypeptide: Poly(ribitol-phosphate) beta-N-acetylglucosaminyltransferase TarS (573 aa).

UDP-N-acetyl-alpha-D-glucosamine is bound by residues proline 9, aspartate 41, asparagine 68, arginine 76, 92 to 94, arginine 127, and glutamate 178; that span reads DSD. Aspartate 94 is a binding site for Mn(2+). Residue aspartate 179 is the Proton acceptor of the active site. UDP-N-acetyl-alpha-D-glucosamine is bound by residues arginine 207 and 211-213; that span reads HMS.

The protein belongs to the glycosyltransferase 2 family. As to quaternary structure, homotrimer. Mn(2+) serves as cofactor.

The enzyme catalyses 4-O-[(D-ribitylphospho)(n)-di{(2R)-glycerylphospho}]-N-acetyl-beta-D-mannosaminyl-(1-&gt;4)-N-acetyl-alpha-D-glucosaminyl di-trans,octa-cis-undecaprenyl diphosphate + n UDP-N-acetyl-alpha-D-glucosamine = 4-O-([2-N-acetyl-beta-D-glucosaminyl-1-D-ribitylphospho](n)-di{[2R]-1-glycerylphospho})-N-acetyl-beta-D-mannosaminyl-(1-&gt;4)-N-acetyl-alpha-D-glucosaminyl di-trans,octa-cis-undecaprenyl diphosphate + n UDP + n H(+). It participates in cell wall biogenesis; poly(ribitol phosphate) teichoic acid biosynthesis. Functionally, attaches beta-O-GlcNAc (beta-O-N-acetyl-D-glucosamine) residues to the C4 position of poly(RboP)-wall teichoic acids (WTAs). Prefers UDP-GlcNAc as a donor substrate and is specific for poly(ribitol phosphate) WTAs. Can also use UDP-Glc and UDP-GalNAc, but not UDP-galactose or UDP-glucuronic acid. Mediates beta-lactam resistance in methicillin resistant Staphylococcus aureus (MRSA) strains. The chain is Poly(ribitol-phosphate) beta-N-acetylglucosaminyltransferase TarS from Staphylococcus aureus (strain MW2).